Consider the following 3977-residue polypeptide: Hybrid PKS-NRPS synthetase gkaA (3977 aa).

Residues 4 to 441 (EEPIAVIGSG…GTNAHVILEN (438 aa)) enclose the Ketosynthase family 3 (KS3) domain. Catalysis depends on for beta-ketoacyl synthase activity residues Cys177, His316, and His361. A Malonyl-CoA:ACP transacylase (MAT) domain is found at 551-867 (VFTGQGAQWP…TGVIHRGKND (317 aa)). The interval 937–1072 (NPLLGTRTTD…GRITVTLGES (136 aa)) is N-terminal hotdog fold. The PKS/mFAS DH domain maps to 937–1241 (NPLLGTRTTD…VVAFSEATAD (305 aa)). His969 serves as the catalytic Proton acceptor; for dehydratase activity. The interval 1087–1241 (LVSIPQDRFY…VVAFSEATAD (155 aa)) is C-terminal hotdog fold. Asp1147 (proton donor; for dehydratase activity) is an active-site residue. A methyltransferase (cMeT) domain region spans residues 1286-1580 (YMKKTVEEFP…FSGIDSSTPE (295 aa)). The 174-residue stretch at 2128–2301 (TYVLFGLTSD…AASILHIGAV (174 aa)) folds into the Ketoreductase (KR) domain. Positions 2409–2490 (SEVFEIISGA…QLLEYAIDNM (82 aa)) constitute a Carrier 1 domain. At Ser2450 the chain carries O-(pantetheine 4'-phosphoryl)serine. A disordered region spans residues 2497–2542 (HSNGEQGTVSDSGSTNIQLTPASTPSVPSVNLASDSTGSSQVGEDV). The segment covering 2499–2538 (NGEQGTVSDSGSTNIQLTPASTPSVPSVNLASDSTGSSQV) has biased composition (polar residues). The interval 2584 to 3018 (EKIIPMSPGQ…LKDISLFSKE (435 aa)) is condensation. Positions 3048–3437 (IAEHPDTISI…GALEILGRID (390 aa)) are adenylation. The Carrier 2 domain occupies 3552–3632 (FSLTPTEDKL…AMASLITPAS (81 aa)). Ser3592 bears the O-(pantetheine 4'-phosphoryl)serine mark. The Thioester reductase (TE) domain maps to 3672-3890 (LTGATGFLGH…FVDLVSVQNV (219 aa)).

This sequence in the C-terminal section; belongs to the NRP synthetase family. Pantetheine 4'-phosphate is required as a cofactor.

It participates in mycotoxin biosynthesis. Hybrid PKS-NRPS synthetase; part of the gene cluster that mediates the biosynthesis of GKK1032, fungal natural products containing a macrocyclic para-cyclophane connected to a decahydrofluorene ring system that show potent antitumor activities. Within the pathway, the PKS-NRPS gkaA, with the help of the trans-enoyl reductase gkaC, synthesize the polyketide-tyrosyl acyl thioester product which can be reductively off-loaded by the terminal reductase (R) domain in gkaA. The PKS module of gkaA acts in combination with the trans-acting enoyl reductase gkaC to produce a methylated polyketide attached to the ACP domain. In parallel, the adenylation (A) domain of the NRPS module activated L-tyrosine, which is then transferred to the ACP domain. The condensation (C) domain subsequently links this group to the polyketide chain, forming an enzyme-bound amide. The alpha/beta hydrolase gkaG is then required to catalyze the subsequent Knoevenagel condensation that affords the 3-pyrrolin-2-one ring, whereas the three proteins gkaB, gkadX and gkaZ then function synergistically to form the cyclophane. This is Hybrid PKS-NRPS synthetase gkaA from Penicillium citrinum.